A 329-amino-acid polypeptide reads, in one-letter code: Beta-ketoacyl-[acyl-carrier-protein] synthase III (329 aa).

Residues cysteine 123 and histidine 256 contribute to the active site. Positions 257 to 261 (QANIR) are ACP-binding. Residue asparagine 286 is part of the active site.

It belongs to the thiolase-like superfamily. FabH family. As to quaternary structure, homodimer.

Its subcellular location is the cytoplasm. The catalysed reaction is malonyl-[ACP] + acetyl-CoA + H(+) = 3-oxobutanoyl-[ACP] + CO2 + CoA. It participates in lipid metabolism; fatty acid biosynthesis. Catalyzes the condensation reaction of fatty acid synthesis by the addition to an acyl acceptor of two carbons from malonyl-ACP. Catalyzes the first condensation reaction which initiates fatty acid synthesis and may therefore play a role in governing the total rate of fatty acid production. Possesses both acetoacetyl-ACP synthase and acetyl transacylase activities. Its substrate specificity determines the biosynthesis of branched-chain and/or straight-chain of fatty acids. This Burkholderia orbicola (strain AU 1054) protein is Beta-ketoacyl-[acyl-carrier-protein] synthase III.